The chain runs to 409 residues: Arginine deiminase (409 aa).

Cysteine 397 serves as the catalytic Amidino-cysteine intermediate.

This sequence belongs to the arginine deiminase family.

Its subcellular location is the cytoplasm. It carries out the reaction L-arginine + H2O = L-citrulline + NH4(+). The protein operates within amino-acid degradation; L-arginine degradation via ADI pathway; carbamoyl phosphate from L-arginine: step 1/2. This Metamycoplasma hominis (Mycoplasma hominis) protein is Arginine deiminase (arcA).